Here is a 186-residue protein sequence, read N- to C-terminus: Probable RNA 2'-phosphotransferase (186 aa).

It belongs to the KptA/TPT1 family.

Removes the 2'-phosphate from RNA via an intermediate in which the phosphate is ADP-ribosylated by NAD followed by a presumed transesterification to release the RNA and generate ADP-ribose 1''-2''-cyclic phosphate (APPR&gt;P). May function as an ADP-ribosylase. The protein is Probable RNA 2'-phosphotransferase of Pectobacterium carotovorum subsp. carotovorum (strain PC1).